The sequence spans 139 residues: Ribulose bisphosphate carboxylase small subunit (139 aa).

It belongs to the RuBisCO small chain family. In terms of assembly, heterohexadecamer of 8 large and 8 small subunits.

It is found in the plastid. The protein resides in the chloroplast. Functionally, ruBisCO catalyzes two reactions: the carboxylation of D-ribulose 1,5-bisphosphate, the primary event in carbon dioxide fixation, as well as the oxidative fragmentation of the pentose substrate in the photorespiration process. Both reactions occur simultaneously and in competition at the same active site. Although the small subunit is not catalytic it is essential for maximal activity. The polypeptide is Ribulose bisphosphate carboxylase small subunit (Trieres chinensis (Marine centric diatom)).